The chain runs to 166 residues: Putative tRNA (cytidine(34)-2'-O)-methyltransferase (166 aa).

Residues leucine 83, glycine 109, isoleucine 130, and serine 138 each coordinate S-adenosyl-L-methionine.

This sequence belongs to the class IV-like SAM-binding methyltransferase superfamily. RNA methyltransferase TrmH family. TrmL subfamily.

It is found in the cytoplasm. The catalysed reaction is cytidine(34) in tRNA + S-adenosyl-L-methionine = 2'-O-methylcytidine(34) in tRNA + S-adenosyl-L-homocysteine + H(+). It carries out the reaction 5-carboxymethylaminomethyluridine(34) in tRNA(Leu) + S-adenosyl-L-methionine = 5-carboxymethylaminomethyl-2'-O-methyluridine(34) in tRNA(Leu) + S-adenosyl-L-homocysteine + H(+). Its function is as follows. Could methylate the ribose at the nucleotide 34 wobble position in tRNA. The polypeptide is Putative tRNA (cytidine(34)-2'-O)-methyltransferase (Mycoplasma genitalium (strain ATCC 33530 / DSM 19775 / NCTC 10195 / G37) (Mycoplasmoides genitalium)).